A 151-amino-acid polypeptide reads, in one-letter code: Potassium/proton antiporter CemA (151 aa).

2 helical membrane-spanning segments follow: residues 7–27 (LPSL…SSSF) and 107–127 (ILHF…FFLG).

Belongs to the CemA family.

It is found in the plastid. Its subcellular location is the chloroplast inner membrane. It catalyses the reaction K(+)(in) + H(+)(out) = K(+)(out) + H(+)(in). Functionally, contributes to K(+)/H(+) antiport activity by supporting proton efflux to control proton extrusion and homeostasis in chloroplasts in a light-dependent manner to modulate photosynthesis. Prevents excessive induction of non-photochemical quenching (NPQ) under continuous-light conditions. Indirectly promotes efficient inorganic carbon uptake into chloroplasts. This is Potassium/proton antiporter CemA from Aegilops crassa (Persian goatgrass).